A 496-amino-acid polypeptide reads, in one-letter code: UDP-N-acetylmuramoylalanine--D-glutamate ligase (496 aa).

130-136 contributes to the ATP binding site; that stretch reads GTNGKTT.

This sequence belongs to the MurCDEF family.

The protein resides in the cytoplasm. It catalyses the reaction UDP-N-acetyl-alpha-D-muramoyl-L-alanine + D-glutamate + ATP = UDP-N-acetyl-alpha-D-muramoyl-L-alanyl-D-glutamate + ADP + phosphate + H(+). The protein operates within cell wall biogenesis; peptidoglycan biosynthesis. Its function is as follows. Cell wall formation. Catalyzes the addition of glutamate to the nucleotide precursor UDP-N-acetylmuramoyl-L-alanine (UMA). The polypeptide is UDP-N-acetylmuramoylalanine--D-glutamate ligase (Mycobacterium bovis (strain ATCC BAA-935 / AF2122/97)).